Consider the following 102-residue polypeptide: MAAVSLSVSTVKPLGDRVFVKVSASEKRPRRLYFPDTAKEKPQVGEVVALGAGKRNDDGSRQELEVKVGDLLLYSKYAGTDVKLGTEEYVLLSEKDILAMVG.

The protein belongs to the GroES chaperonin family. In terms of assembly, heptamer of 7 subunits arranged in a ring. Interacts with the chaperonin GroEL.

It localises to the cytoplasm. In terms of biological role, together with the chaperonin GroEL, plays an essential role in assisting protein folding. The GroEL-GroES system forms a nano-cage that allows encapsulation of the non-native substrate proteins and provides a physical environment optimized to promote and accelerate protein folding. GroES binds to the apical surface of the GroEL ring, thereby capping the opening of the GroEL channel. The sequence is that of Co-chaperonin GroES from Anabaena sp. (strain L31).